A 440-amino-acid polypeptide reads, in one-letter code: Protein dumpy-20 (440 aa).

Residues 96–119 (ILSDPSLHGSNSSSSTSDVGSSVD) form a disordered region. Residues 98-119 (SDPSLHGSNSSSSTSDVGSSVD) show a composition bias toward low complexity. BED-type zinc fingers lie at residues 137-186 (PTEN…YQKV) and 350-399 (KTEH…YNDV). The Zn(2+) site is built by Cys156, Cys159, His174, His179, Cys369, Cys372, His387, and His392.

Functionally, may be directly or indirectly involved in cuticle function. The chain is Protein dumpy-20 (dpy-20) from Caenorhabditis elegans.